A 534-amino-acid chain; its full sequence is uncharacterized protein (534 aa).

A run of 5 helical transmembrane segments spans residues 4 to 22 (ILVL…RVSF), 24 to 46 (GISL…GWTI), 56 to 75 (ALFV…RGLA), 82 to 104 (AITG…RLLG), and 134 to 156 (PAAV…VLFV). Residues 167-187 (GDSDGTDSASETSGQSSAEIA) are disordered. Polar residues predominate over residues 172–187 (TDSASETSGQSSAEIA). 2 RCK C-terminal domains span residues 180–264 (GQSS…TLGE) and 265–349 (LQDT…AVGH). The next 6 membrane-spanning stretches (helical) occupy residues 359 to 378 (LLSL…LSLQ), 382 to 401 (FSMS…ILGH), 408 to 430 (IRGS…LFLA), 445 to 467 (MERG…LVGF), 479 to 501 (WQSL…LTGA), and 511 to 533 (YVAA…VELI).

This sequence belongs to the AAE transporter (TC 2.A.81) family.

It is found in the cell membrane. This is an uncharacterized protein from Rhodopirellula baltica (strain DSM 10527 / NCIMB 13988 / SH1).